The sequence spans 401 residues: Chorismate synthase (401 aa).

NADP(+) is bound by residues Arg40 and Arg46. Residues 135–137 (RAS), 256–257 (QA), Gly300, 315–319 (KPIST), and Arg341 each bind FMN.

It belongs to the chorismate synthase family. Homotetramer. Requires FMNH2 as cofactor.

The catalysed reaction is 5-O-(1-carboxyvinyl)-3-phosphoshikimate = chorismate + phosphate. Its pathway is metabolic intermediate biosynthesis; chorismate biosynthesis; chorismate from D-erythrose 4-phosphate and phosphoenolpyruvate: step 7/7. Functionally, catalyzes the anti-1,4-elimination of the C-3 phosphate and the C-6 proR hydrogen from 5-enolpyruvylshikimate-3-phosphate (EPSP) to yield chorismate, which is the branch point compound that serves as the starting substrate for the three terminal pathways of aromatic amino acid biosynthesis. This reaction introduces a second double bond into the aromatic ring system. This is Chorismate synthase from Mycobacterium avium (strain 104).